Reading from the N-terminus, the 346-residue chain is MNDEKSQDNGKRNSGYTSIEQMLAVNPGKTPISLLQEYGTRIGKTPVYDLLKAEGQAHQPNFTFRVSVGDINCTGHGPSKKAAKHKAAEAALKMLKGGMLGGIGGNGMEGDGFVGIEMEGECPQSEMKSSSSTQQAECNPVGALQELVVQKGWRLPEYTVTQESGPAHRKEFTMTCRVERFVEIGSGTSKKLAKRNAAAKMLSRIHDVPVDMRSSHEAEAEDDTFNMQIGGRLEGGKSKGLGCTWDSLRNSAGEKILQLRCHPLGQSDSIDSNFCSLLRELSEEQRFGVSYLDIEERSLSGLYQCLVELSTQPITVCHGFASSLDAARASAAHNALQYLKIMAGGK.

3 consecutive DRBM domains span residues 30 to 97 (TPIS…MLKG), 139 to 207 (NPVG…RIHD), and 273 to 341 (NFCS…YLKI).

Belongs to the TARBP2 family. In terms of assembly, self-associates. Component of the RISC loading complex (RLC), or micro-RNA (miRNA) loading complex (miRLC), which is composed of dicer1, ago2 and tarbp2. Note that the trimeric RLC/miRLC is also referred to as RISC.

It localises to the cytoplasm. Functionally, required for formation of the RNA induced silencing complex (RISC). Component of the RISC loading complex (RLC), also known as the micro-RNA (miRNA) loading complex (miRLC), which is composed of dicer1, ago2 and tarbp2. Within the RLC/miRLC, dicer1 and tarbp2 are required to process precursor miRNAs (pre-miRNAs) to mature miRNAs and then load them onto ago2. ago2 bound to the mature miRNA constitutes the minimal RISC and may subsequently dissociate from dicer1 and tarbp2. May also play a role in the production of short interfering RNAs (siRNAs) from double-stranded RNA (dsRNA) by dicer1. Binds in vitro to the PRM1 3'-UTR. Seems to act as a repressor of translation. For some pre-miRNA substrates, may also alter the choice of cleavage site by DICER1. In Danio rerio (Zebrafish), this protein is RISC-loading complex subunit tarbp2 (tarbp2).